The primary structure comprises 252 residues: Outer membrane protein P1 (252 aa).

A signal peptide spans Met1 to Ala23.

The protein belongs to the Coxiella porin P1 (CPP1) (TC 1.B.43) family. As to quaternary structure, may form trimers.

Its subcellular location is the cell outer membrane. Its function is as follows. Able to form a pore in lipid bilayers. The chain is Outer membrane protein P1 (ompP1) from Coxiella burnetii (strain RSA 493 / Nine Mile phase I).